A 423-amino-acid polypeptide reads, in one-letter code: Glutamyl-tRNA reductase 2 (423 aa).

Substrate contacts are provided by residues 48 to 51 (TCYR), S103, 108 to 110 (EPQ), and Q114. Residue C49 is the Nucleophile of the active site. An NADP(+)-binding site is contributed by 183 to 188 (GAGEMA).

This sequence belongs to the glutamyl-tRNA reductase family. In terms of assembly, homodimer.

It carries out the reaction (S)-4-amino-5-oxopentanoate + tRNA(Glu) + NADP(+) = L-glutamyl-tRNA(Glu) + NADPH + H(+). It functions in the pathway porphyrin-containing compound metabolism; protoporphyrin-IX biosynthesis; 5-aminolevulinate from L-glutamyl-tRNA(Glu): step 1/2. Its function is as follows. Catalyzes the NADPH-dependent reduction of glutamyl-tRNA(Glu) to glutamate 1-semialdehyde (GSA). This Anaeromyxobacter sp. (strain Fw109-5) protein is Glutamyl-tRNA reductase 2.